The sequence spans 316 residues: Ribosomal protein L11 methyltransferase (316 aa).

Positions 162, 183, 205, and 248 each coordinate S-adenosyl-L-methionine.

It belongs to the methyltransferase superfamily. PrmA family.

It localises to the cytoplasm. It carries out the reaction L-lysyl-[protein] + 3 S-adenosyl-L-methionine = N(6),N(6),N(6)-trimethyl-L-lysyl-[protein] + 3 S-adenosyl-L-homocysteine + 3 H(+). Functionally, methylates ribosomal protein L11. The polypeptide is Ribosomal protein L11 methyltransferase (Levilactobacillus brevis (strain ATCC 367 / BCRC 12310 / CIP 105137 / JCM 1170 / LMG 11437 / NCIMB 947 / NCTC 947) (Lactobacillus brevis)).